Reading from the N-terminus, the 475-residue chain is Ankyrin repeat, SAM and basic leucine zipper domain-containing protein 1 (475 aa).

Residues 1-25 (MAAGALRGLPVAGGGESSESEDDGW) are disordered. Ser17, Ser18, and Ser20 each carry phosphoserine. ANK repeat units lie at residues 45–74 (EKKEKFKKAMTIGDVSLVQELLDSGISVDS), 78–107 (YGWTPLMYAASVANAELVRVLLDRGANASF), 110–144 (DKQTILITACSAHGSEEQILKCVELLLSRNADPNV), 148–177 (RLMTPIMYAARDGHTQVVALLVAHGAEVNT), 181–210 (NGYTALTWAARQGHKNIVLKLLELGANKML), and 214–243 (DGKMPSEIAKRNKHHEIFNLLSFTLNPLEG). The SAM domain occupies 272–334 (SYTAFGDLEV…KILAALKELQ (63 aa)).

In terms of assembly, interacts with DDX4, PIWIL1, RANBP9 and TDRD1.

The protein resides in the cytoplasm. Functionally, plays a central role during spermatogenesis by repressing transposable elements and preventing their mobilization, which is essential for the germline integrity. Acts via the piRNA metabolic process, which mediates the repression of transposable elements during meiosis by forming complexes composed of piRNAs and Piwi proteins and governs the methylation and subsequent repression of transposons. Its association with pi-bodies suggests a participation in the primary piRNAs metabolic process. Required prior to the pachytene stage to facilitate the production of multiple types of piRNAs, including those associated with repeats involved in the regulation of retrotransposons. May act by mediating protein-protein interactions during germ cell maturation. This is Ankyrin repeat, SAM and basic leucine zipper domain-containing protein 1 (ASZ1) from Chlorocebus aethiops (Green monkey).